Here is a 483-residue protein sequence, read N- to C-terminus: PRAME family member 12 (483 aa).

The LRR 1; degenerate repeat unit spans residues 97-122 (RWKLQVLDLRNVDENFWGIWSGASAL). The LRR 2; degenerate repeat unit spans residues 177-201 (HVCCKELQIFGIAIHRIIEVLNTVE). The stretch at 202-228 (LDCIQEVEVCCPWELSILIRFAPYLGQ) is one LRR 3; degenerate repeat. An LRR 4; degenerate repeat occupies 229–264 (MRNLRKLVLFNIHVSACIPLDRKEQFVIQFTSQFLK). LRR repeat units follow at residues 265 to 290 (LDYFQKLYMHSVSFLEGHLDQLLRCL), 291 to 322 (QAPLETVVMTECLLSESDLKHLSWCPSIRQLK), 323 to 341 (ELDLRGITLTHFSPEPLSV), 347 to 374 (EATLQTLDLEDCGIVDSQLSAILPALSR), and 375 to 399 (CSQLSTFSFCGNLISMAALENLLRH).

Belongs to the PRAME family.

This Homo sapiens (Human) protein is PRAME family member 12.